Reading from the N-terminus, the 1082-residue chain is RNA-directed RNA polymerase (1082 aa).

Positions 498-670 constitute a RdRp catalytic domain; the sequence is LSYGDVTRYL…ALASLTGCEI (173 aa).

The protein belongs to the reoviridae RNA-directed RNA polymerase family. In terms of assembly, interacts with VP3 (Potential). Interacts with VP2; this interaction activates VP1. Interacts with NSP5; this interaction is probably necessary for the formation of functional virus factories. Interacts with NSP2; this interaction is weak. Mg(2+) is required as a cofactor.

It is found in the virion. It carries out the reaction RNA(n) + a ribonucleoside 5'-triphosphate = RNA(n+1) + diphosphate. RNA-directed RNA polymerase that is involved in both transcription and genome replication. Together with VP3 capping enzyme, forms an enzyme complex positioned near the channels situated at each of the five-fold vertices of the core. Following infection, the outermost layer of the virus is lost, leaving a double-layered particle (DLP) made up of the core and VP6 shell. VP1 then catalyzes the transcription of fully conservative plus-strand genomic RNAs that are extruded through the DLP's channels into the cytoplasm where they function as mRNAs for translation of viral proteins. One copy of each of the viral (+)RNAs is also recruited during core assembly, together with newly synthesized polymerase complexes and VP2. The polymerase of these novo-formed particles catalyzes the synthesis of complementary minus-strands leading to dsDNA formation. To do so, the polymerase specifically recognizes conserved 3' sequence(s) in plus-strand RNA templates. Once dsRNA synthesis is complete, the polymerase switches to the transcriptional mode, thus providing secondary transcription. The polypeptide is RNA-directed RNA polymerase (Rotavirus C (strain RVC/Pig/United States/Cowden/1980) (RV-C)).